Here is a 317-residue protein sequence, read N- to C-terminus: 4-hydroxy-3-methylbut-2-enyl diphosphate reductase (317 aa).

Cysteine 12 lines the [4Fe-4S] cluster pocket. Histidine 41 and histidine 74 together coordinate (2E)-4-hydroxy-3-methylbut-2-enyl diphosphate. Dimethylallyl diphosphate is bound by residues histidine 41 and histidine 74. Residues histidine 41 and histidine 74 each coordinate isopentenyl diphosphate. Cysteine 97 contributes to the [4Fe-4S] cluster binding site. Histidine 125 serves as a coordination point for (2E)-4-hydroxy-3-methylbut-2-enyl diphosphate. Histidine 125 contacts dimethylallyl diphosphate. An isopentenyl diphosphate-binding site is contributed by histidine 125. Glutamate 127 (proton donor) is an active-site residue. Threonine 168 contributes to the (2E)-4-hydroxy-3-methylbut-2-enyl diphosphate binding site. Cysteine 198 provides a ligand contact to [4Fe-4S] cluster. The (2E)-4-hydroxy-3-methylbut-2-enyl diphosphate site is built by serine 226, serine 227, asparagine 228, and serine 270. The dimethylallyl diphosphate site is built by serine 226, serine 227, asparagine 228, and serine 270. Residues serine 226, serine 227, asparagine 228, and serine 270 each coordinate isopentenyl diphosphate.

This sequence belongs to the IspH family. Homodimer. [4Fe-4S] cluster serves as cofactor.

The catalysed reaction is isopentenyl diphosphate + 2 oxidized [2Fe-2S]-[ferredoxin] + H2O = (2E)-4-hydroxy-3-methylbut-2-enyl diphosphate + 2 reduced [2Fe-2S]-[ferredoxin] + 2 H(+). It catalyses the reaction dimethylallyl diphosphate + 2 oxidized [2Fe-2S]-[ferredoxin] + H2O = (2E)-4-hydroxy-3-methylbut-2-enyl diphosphate + 2 reduced [2Fe-2S]-[ferredoxin] + 2 H(+). It participates in isoprenoid biosynthesis; dimethylallyl diphosphate biosynthesis; dimethylallyl diphosphate from (2E)-4-hydroxy-3-methylbutenyl diphosphate: step 1/1. It functions in the pathway isoprenoid biosynthesis; isopentenyl diphosphate biosynthesis via DXP pathway; isopentenyl diphosphate from 1-deoxy-D-xylulose 5-phosphate: step 6/6. Functionally, catalyzes the conversion of 1-hydroxy-2-methyl-2-(E)-butenyl 4-diphosphate (HMBPP) into a mixture of isopentenyl diphosphate (IPP) and dimethylallyl diphosphate (DMAPP). Acts in the terminal step of the DOXP/MEP pathway for isoprenoid precursor biosynthesis. This is 4-hydroxy-3-methylbut-2-enyl diphosphate reductase from Yersinia pseudotuberculosis serotype O:1b (strain IP 31758).